A 49-amino-acid polypeptide reads, in one-letter code: Large ribosomal subunit protein eL40 (49 aa).

This sequence belongs to the eukaryotic ribosomal protein eL40 family.

This is Large ribosomal subunit protein eL40 from Haloquadratum walsbyi (strain DSM 16790 / HBSQ001).